The sequence spans 161 residues: UPF0178 protein BruAb1_1955 (161 aa).

The protein belongs to the UPF0178 family.

This is UPF0178 protein BruAb1_1955 from Brucella abortus biovar 1 (strain 9-941).